A 418-amino-acid chain; its full sequence is Glutamyl-tRNA reductase (418 aa).

Substrate-binding positions include 49–52 (TCNR), S109, 114–116 (EPQ), and Q120. Residue C50 is the Nucleophile of the active site. 189 to 194 (GAGETI) provides a ligand contact to NADP(+).

Belongs to the glutamyl-tRNA reductase family. In terms of assembly, homodimer.

The catalysed reaction is (S)-4-amino-5-oxopentanoate + tRNA(Glu) + NADP(+) = L-glutamyl-tRNA(Glu) + NADPH + H(+). It participates in porphyrin-containing compound metabolism; protoporphyrin-IX biosynthesis; 5-aminolevulinate from L-glutamyl-tRNA(Glu): step 1/2. Functionally, catalyzes the NADPH-dependent reduction of glutamyl-tRNA(Glu) to glutamate 1-semialdehyde (GSA). The sequence is that of Glutamyl-tRNA reductase from Pectobacterium atrosepticum (strain SCRI 1043 / ATCC BAA-672) (Erwinia carotovora subsp. atroseptica).